The following is a 161-amino-acid chain: Regulator of ribonuclease activity A (161 aa).

It belongs to the RraA family. As to quaternary structure, homotrimer. Binds to both RNA-binding sites in the C-terminal region of Rne and to RhlB.

It is found in the cytoplasm. Functionally, globally modulates RNA abundance by binding to RNase E (Rne) and regulating its endonucleolytic activity. Can modulate Rne action in a substrate-dependent manner by altering the composition of the degradosome. Modulates RNA-binding and helicase activities of the degradosome. The polypeptide is Regulator of ribonuclease activity A (Yersinia enterocolitica serotype O:8 / biotype 1B (strain NCTC 13174 / 8081)).